An 87-amino-acid polypeptide reads, in one-letter code: Potassium channel toxin Tdi-beta-KTx (87 aa).

The N-terminal stretch at Met-1–Ser-19 is a signal peptide. A propeptide spanning residues Gly-20–Gln-27 is cleaved from the precursor. Positions Gln-53–Ser-87 constitute a BetaSPN-type CS-alpha/beta domain. Disulfide bonds link Cys-56/Cys-77, Cys-63/Cys-82, and Cys-67/Cys-84.

Expressed by the venom gland.

It localises to the secreted. In terms of biological role, inhibits voltage-gated potassium channel. This Tityus discrepans (Venezuelan scorpion) protein is Potassium channel toxin Tdi-beta-KTx.